Here is a 230-residue protein sequence, read N- to C-terminus: Small ribosomal subunit protein uS3 (230 aa).

The KH type-2 domain maps to 43-95; the sequence is VNRVIIYSARPKMISEERKAHLAKLLELKFGLEKPVIEVLPIENPNLDAHVIA.

This sequence belongs to the universal ribosomal protein uS3 family. Part of the 30S ribosomal subunit.

In terms of biological role, binds the lower part of the 30S subunit head. In Nanoarchaeum equitans (strain Kin4-M), this protein is Small ribosomal subunit protein uS3.